We begin with the raw amino-acid sequence, 518 residues long: Glutamate--cysteine ligase (518 aa).

The protein belongs to the glutamate--cysteine ligase type 1 family. Type 1 subfamily.

The catalysed reaction is L-cysteine + L-glutamate + ATP = gamma-L-glutamyl-L-cysteine + ADP + phosphate + H(+). Its pathway is sulfur metabolism; glutathione biosynthesis; glutathione from L-cysteine and L-glutamate: step 1/2. The sequence is that of Glutamate--cysteine ligase from Shigella sonnei (strain Ss046).